The sequence spans 232 residues: Putative N-acetylmannosamine-6-phosphate 2-epimerase (232 aa).

This sequence belongs to the NanE family.

The catalysed reaction is an N-acyl-D-glucosamine 6-phosphate = an N-acyl-D-mannosamine 6-phosphate. It participates in amino-sugar metabolism; N-acetylneuraminate degradation; D-fructose 6-phosphate from N-acetylneuraminate: step 3/5. Its function is as follows. Converts N-acetylmannosamine-6-phosphate (ManNAc-6-P) to N-acetylglucosamine-6-phosphate (GlcNAc-6-P). This is Putative N-acetylmannosamine-6-phosphate 2-epimerase from Borreliella burgdorferi (strain ZS7) (Borrelia burgdorferi).